Here is a 529-residue protein sequence, read N- to C-terminus: Peptide chain release factor 3 (529 aa).

The 270-residue stretch at 11-280 (AKRRTFAIIS…GLVEWAPAPM (270 aa)) folds into the tr-type G domain. GTP-binding positions include 20–27 (SHPDAGKT), 88–92 (DTPGH), and 142–145 (NKLD).

The protein belongs to the TRAFAC class translation factor GTPase superfamily. Classic translation factor GTPase family. PrfC subfamily.

Its subcellular location is the cytoplasm. Functionally, increases the formation of ribosomal termination complexes and stimulates activities of RF-1 and RF-2. It binds guanine nucleotides and has strong preference for UGA stop codons. It may interact directly with the ribosome. The stimulation of RF-1 and RF-2 is significantly reduced by GTP and GDP, but not by GMP. This Klebsiella pneumoniae subsp. pneumoniae (strain ATCC 700721 / MGH 78578) protein is Peptide chain release factor 3.